The primary structure comprises 154 residues: Superoxide dismutase [Cu-Zn] (154 aa).

Residues H47, H49, and H64 each contribute to the Cu cation site. C58 and C147 are joined by a disulfide. Zn(2+) is bound by residues H64, H72, H81, and D84. A Cu cation-binding site is contributed by H121. A compositionally biased stretch (basic and acidic residues) spans 124–137 (TDDLGRGDSEESKK). Residues 124–144 (TDDLGRGDSEESKKTGNAGAR) form a disordered region. Residue R144 participates in substrate binding.

Belongs to the Cu-Zn superoxide dismutase family. As to quaternary structure, homodimer. It depends on Cu cation as a cofactor. The cofactor is Zn(2+).

The protein resides in the cytoplasm. The enzyme catalyses 2 superoxide + 2 H(+) = H2O2 + O2. Functionally, destroys radicals which are normally produced within the cells and which are toxic to biological systems. This chain is Superoxide dismutase [Cu-Zn] (sodA), found in Emericella nidulans (strain FGSC A4 / ATCC 38163 / CBS 112.46 / NRRL 194 / M139) (Aspergillus nidulans).